The chain runs to 80 residues: Sulfur carrier protein TusA (80 aa).

Cys-17 (cysteine persulfide intermediate) is an active-site residue.

The protein belongs to the sulfur carrier protein TusA family.

It is found in the cytoplasm. Its function is as follows. Sulfur carrier protein which probably makes part of a sulfur-relay system. The protein is Sulfur carrier protein TusA of Pseudomonas putida (strain ATCC 47054 / DSM 6125 / CFBP 8728 / NCIMB 11950 / KT2440).